The following is a 1384-amino-acid chain: MASSSSMDIEGATQHLRDILKLDRPGNSAEASLVESQRKPSFNGELNGVLGSDLMGAAMVEPTVHNSDKLNGQDTQTICLSGDDGSICVPIRANIVEIVSSRDSSIDSKARGSNKVKIQPVAKYDWEHKYYYGNLIAVSNTYLAYAIRGANNHSMIRVLHLSSTERSLLKGFTGAVTDLAFAHLDSTLLGCVDEAGNMFIWQLTSHSSKIQDEVIVHIRRPEDTPLNSNRRLIWCPFIPEDNDESPEDACQTLALLHEDRAEVWDLDILRSNNSSWPVDATELKEGFITIRGHAARISEGALSPDGTVLATASHDGYVKFWQIYIEGQDQPRCLHEWQPHNGQPLSCLLFCDNHKKQDPDVPFWRFLITGADQNQELKMWCTVSWTCLQTIRFSPDPFNCGVLPSLKASLDLSAEFLILSDVQRKVLYVMELLQDQEKGRASFTAVSEFLLTHPVLSFGVQDVSRARLRHTEVLPPEEESESMTAEGNQGTSESRSGIQIKLYCVHTKSLQDVQIWFQPNQGDSSSLFMPQSGSQDGFSFSDPLADLNVEAMSSDKESGDSGSQNDLSKILPLPSPADFMSPAPSALPKLMTPDAFMTPSASMPASPGSSASSLTIVTAMSSSDSGARGGDDLTQSPKMSVECVNSSFANAGSPRSNSILISGLGENIQVSPPNPPLSLDLQAIDPMVVPQASPTRARSPDVISSASTAMSQDIPEIASETLQRGLSGANADSGPILHSDSMASAASILHLLSPRARSSAEHSLLPLELGAASVDGEQRLSNTPSLLETALSQENAGAAGGSCSDSSVNHAWPAAPDITRETRNSLRDNGLGDCSREEIKDRHISSPYHRRTYHLTQNDSQDASAEQSDHDDEVASLASSSGNCGPRSSHRLPVKDWKTSPRSSPKLKRKSKKDEGESSQSRQIESQMSTEVQDELLQMLRSQQREIAELRQNQLDLLQRVTSHMDAVQSSMMAHIEHAMLAQQEQEQRRMERILVEGQSRNQQLQDQLVQQLVQTLNNSLCNRLEKVLREEMKKTVPQTISKSLEPVTGQMNSTIAAKLTAVEGALKENVTKVVKSKNTTDAIGRAAAEAMQGPIQAAYKETFQSIVLPVFERGCQSMFQQINDSFKQGTNEYIQQLETHIKNRKQRDQDTRDPVIGQLQQMIDSLQSSQDQLASTVTASVSSDVQHQLHMIVGNLQDSILTQVQRIVKGEVSLAMKEQQAAVTSSIMQAMRSAAGTPVPSAHLDYQAQQASILQLLQQGQLNEAFQQALSAADLNLVLYVCETIDSQQVFGQQPCPLHQAVLLSLIQQLSTNLSTRTELKISYLEDAVMNLDHGDPVTRDHMSAVLTQVRQKLFLFLQQDAHSPMSKRARRLMMMLQGLVNH.

WD repeat units follow at residues 171 to 211 (GFTG…SKIQ), 227 to 274 (NSNR…SNNS), 292 to 331 (GHAA…QDQP), and 340 to 390 (HNGQ…CLQT). Disordered stretches follow at residues 471-494 (TEVL…TSES), 551-584 (AMSS…SPAP), and 796-931 (AGAA…MSTE). Residues 482–494 (SMTAEGNQGTSES) show a composition bias toward polar residues. Residues 834-844 (CSREEIKDRHI) are compositionally biased toward basic and acidic residues. 2 stretches are compositionally biased toward polar residues: residues 854 to 866 (HLTQ…ASAE) and 918 to 931 (SSQS…MSTE). A coiled-coil region spans residues 930–1012 (TEVQDELLQM…QQLQDQLVQQ (83 aa)).

The protein belongs to the WD repeat EDC4 family.

It is found in the cytoplasm. The protein localises to the P-body. The protein resides in the nucleus. In terms of biological role, in the process of mRNA degradation, seems to play a role in mRNA decapping. This Danio rerio (Zebrafish) protein is Enhancer of mRNA-decapping protein 4 (edc4).